A 250-amino-acid chain; its full sequence is 5'-nucleotidase SurE (250 aa).

4 residues coordinate a divalent metal cation: Asp8, Asp9, Ser39, and Asn91.

The protein belongs to the SurE nucleotidase family. It depends on a divalent metal cation as a cofactor.

The protein resides in the cytoplasm. The enzyme catalyses a ribonucleoside 5'-phosphate + H2O = a ribonucleoside + phosphate. In terms of biological role, nucleotidase that shows phosphatase activity on nucleoside 5'-monophosphates. The sequence is that of 5'-nucleotidase SurE from Syntrophotalea carbinolica (strain DSM 2380 / NBRC 103641 / GraBd1) (Pelobacter carbinolicus).